The sequence spans 453 residues: uncharacterized protein (453 aa).

This is an uncharacterized protein from Galliformes (FAdV-1).